Reading from the N-terminus, the 152-residue chain is Ribosome maturation factor RimP (152 aa).

This sequence belongs to the RimP family.

It is found in the cytoplasm. Its function is as follows. Required for maturation of 30S ribosomal subunits. The sequence is that of Ribosome maturation factor RimP from Salmonella arizonae (strain ATCC BAA-731 / CDC346-86 / RSK2980).